The chain runs to 186 residues: Oligoribonuclease (186 aa).

The Exonuclease domain maps to 8 to 171; the sequence is LIWIDLEMTG…DDIRESIAEL (164 aa). Y129 is a catalytic residue.

The protein belongs to the oligoribonuclease family.

The protein resides in the cytoplasm. Functionally, 3'-to-5' exoribonuclease specific for small oligoribonucleotides. The sequence is that of Oligoribonuclease from Mannheimia succiniciproducens (strain KCTC 0769BP / MBEL55E).